We begin with the raw amino-acid sequence, 157 residues long: Protein-export protein SecB (157 aa).

This sequence belongs to the SecB family. Homotetramer, a dimer of dimers. One homotetramer interacts with 1 SecA dimer.

Its subcellular location is the cytoplasm. Functionally, one of the proteins required for the normal export of preproteins out of the cell cytoplasm. It is a molecular chaperone that binds to a subset of precursor proteins, maintaining them in a translocation-competent state. It also specifically binds to its receptor SecA. The polypeptide is Protein-export protein SecB (Tolumonas auensis (strain DSM 9187 / NBRC 110442 / TA 4)).